Consider the following 468-residue polypeptide: Neuronal acetylcholine receptor subunit alpha-5 (468 aa).

The signal sequence occupies residues 1 to 22; the sequence is MAARGSGPRALRLLLLVQLVAG. The Extracellular portion of the chain corresponds to 23-254; it reads RCGLAGAAGG…VIKRLPLFYT (232 aa). Residues Asn-155, Asn-183, and Asn-229 are each glycosylated (N-linked (GlcNAc...) asparagine). Residues Cys-170 and Cys-184 are joined by a disulfide bond. A disulfide bridge links Cys-234 with Cys-235. The next 3 membrane-spanning stretches (helical) occupy residues 255 to 275, 282 to 302, and 317 to 337; these read LFLI…FYLP, ICLC…IEEI, and LVFT…AINI. The Cytoplasmic segment spans residues 338-429; it reads HHRSSSTHNA…WKFIAQVLDR (92 aa). Residues 430 to 451 traverse the membrane as a helical segment; the sequence is MFLWTFLFVSIVGSLGLFVPVI. Topologically, residues 452–468 are extracellular; the sequence is YKWANILIPVHIGNANK.

It belongs to the ligand-gated ion channel (TC 1.A.9) family. Acetylcholine receptor (TC 1.A.9.1) subfamily. Alpha-5/CHRNA5 sub-subfamily. As to quaternary structure, neuronal AChR that forms heteropentamers composed of two different type of subunits: alpha and non-alpha (beta). CHRNA5/alpha-5 subunit is only able to form functional nAChRs when co-assembled with another alpha subunit, can be combined to CHRNA4/alpha-4 or CHRNA3/alpha-3 and CHRNB4/beta-4 or CHRNB2/beta-2 to give rise to functional receptors. Interacts with LYPD6.

The protein resides in the synaptic cell membrane. Its subcellular location is the cell membrane. The enzyme catalyses Ca(2+)(in) = Ca(2+)(out). It carries out the reaction K(+)(in) = K(+)(out). It catalyses the reaction Na(+)(in) = Na(+)(out). With respect to regulation, activated by a myriad of ligands such as acetylcholine, cytisine, nicotine, choline and epibatidine. Component of neuronal acetylcholine receptors (nAChRs) that function as pentameric, ligand-gated cation channels with high calcium permeability among other activities. nAChRs are excitatory neurotrasnmitter receptors formed by a collection of nAChR subunits known to mediate synaptic transmission in the nervous system and the neuromuscular junction. Each nAchR subunit confers differential attributes to channel properties, including activation, deactivation and desensitization kinetics, pH sensitivity, cation permeability, and binding to allosteric modulators. Has an accessory rather than functional role and is only able to form functional nAChRs when co-assembled with another beta subunit. Participates in pentameric assemblies along with CHRNA3, CHRNA4, CHRNB2 and CHRNB4. Increases receptor sensitivity to acetylcholine and nicotine when associated with CHRNA4 and CHRNB2. Plays a role in nicotine addiction. The sequence is that of Neuronal acetylcholine receptor subunit alpha-5 from Homo sapiens (Human).